A 406-amino-acid chain; its full sequence is MRNTKRAVVFAGDYAYIRQIETAMKSLCRHNSHLKIYLLNQDIPQEWFSQIRIYLQEMGGDLIDCKLIGSQFQMNWSNKLPHINHMTFARYFIPDFVTEDKVLYLDSDLIVTGDLTDLFELDLGENYLAAARSCFGAGVGFNAGVLLINNKKWGSETIRQKLIDLTEKEHENVEEGDQSILNMLFKDQYSSLEDQYNFQIGYDYGAATFKHQFIFDIPLEPLPLILHYISQDKPWNQFSVGRLREVWWEYSLMDWSVILNEWFSKSVKYPSKSQIFKLQCVNLTNSWCVEKIDYLAEQLPEVHFHIVAYTNMANELLALTRFPNVTVYPNSLPMLLEQIVIASDLYLDLNHDRKLEDAYEFVLKYKKPMIAFDNTCSENLSEISYEGIYPSSIPKKMVAAIRSYMR.

A GT8 domain region spans residues 3-265 (NTKRAVVFAG…SVILNEWFSK (263 aa)). UDP is bound by residues 11-16 (AGDYAY) and 106-107 (DS). Mn(2+) is bound by residues Asp106, Asp108, and His227. Position 227 to 233 (227 to 233 (HYISQDK)) interacts with UDP.

This sequence in the N-terminal section; belongs to the glycosyltransferase 8 family. It depends on Mn(2+) as a cofactor.

The protein operates within protein modification; protein glycosylation. Involved in the polymorphic O-glycosylation of the serine-rich repeat protein PsrP. Catalyzes the third step in glycosylation of PsrP in this bacteria. Transfers galactose from UDP-galactose to the terminal glucose moiety of already-glycosylated PsrP (using the short substrate PsrP-GlcNAc-Glc). Has a very marked preference for PsrP substrate that has already been modified by GlcNAc and glucose. Has hydrolytic activity against UDP-galactose but none against UDP-glucose. Its function is as follows. Also catalyzes the fourth step in glycosylation of PsrP in this bacteria. Can transfer the sugar from UDP-galactose to the terminal sugar moiety of PsrP-GlcNAc-Glc-Glc and of PsrP-GlcNAc-Glc-Gal. The protein is Glycosyltransferase GlyE of Streptococcus pneumoniae serotype 4 (strain ATCC BAA-334 / TIGR4).